Consider the following 357-residue polypeptide: Vomeronasal type-1 receptor 5 (357 aa).

Residues 1–3 (MLK) lie on the Extracellular side of the membrane. The chain crosses the membrane as a helical span at residues 4-24 (LVIIENMAEIMLFSLDLLLFS). Residues 25–52 (TDILCFNFPSKMIKLPGFITIQIFFYPQ) lie on the Cytoplasmic side of the membrane. A helical membrane pass occupies residues 53–73 (ASFGISANTILFLFHIFTFVF). The Extracellular portion of the chain corresponds to 74–81 (SHRSKSID). The helical transmembrane segment at 82-102 (MIISHLSLIHILLLFTQAILV) threads the bilayer. The Cytoplasmic portion of the chain corresponds to 103 to 130 (SLDFFGSQNTQDDLRCKVIVFLNKVMRG). Residues 131–151 (LSICTPCLLNVLQAIISPSIF) form a helical membrane-spanning segment. At 152-163 (SLAKLKHPSASH) the chain is on the extracellular side. A helical transmembrane segment spans residues 164–184 (ILGFFLFSWVLNMFIGVIFCC). The Cytoplasmic portion of the chain corresponds to 185-269 (TLWLPPVKWG…PVSPVKRASQ (85 aa)). A helical membrane pass occupies residues 270–290 (TILLLVSFVFIYWVDFMFSFS). Residues 291–300 (RGVTWINDSL) lie on the Extracellular side of the membrane. Asn297 carries an N-linked (GlcNAc...) asparagine glycan. A helical transmembrane segment spans residues 301 to 321 (LVWFQVIVANSYATISPLMLI). At 322–357 (YADNQIFKTLQMLWFKYLSPPKLMLKFNRQCGSTKK) the chain is on the cytoplasmic side.

It belongs to the G-protein coupled receptor 1 family.

The protein localises to the cell membrane. Functionally, putative pheromone receptor. This is Vomeronasal type-1 receptor 5 (VN1R5) from Gorilla gorilla gorilla (Western lowland gorilla).